A 312-amino-acid chain; its full sequence is Serine/threonine-protein phosphatase CPPED1 (312 aa).

The residue at position 2 (serine 2) is a Phosphoserine. Residues 47–250 (KAWSTGNCDN…AVFSGHYHRN (204 aa)) form a catalytic region. Residues aspartate 90, asparagine 127, and histidine 246 each contribute to the a divalent metal cation site. Serine 293 carries the phosphoserine modification.

Belongs to the metallophosphoesterase superfamily. CPPED1 family. It depends on a divalent metal cation as a cofactor.

Its subcellular location is the cytoplasm. It catalyses the reaction O-phospho-L-seryl-[protein] + H2O = L-seryl-[protein] + phosphate. It carries out the reaction O-phospho-L-threonyl-[protein] + H2O = L-threonyl-[protein] + phosphate. Protein phosphatase that dephosphorylates AKT family kinase specifically at 'Ser-473', blocking cell cycle progression and promoting cell apoptosis. May play an inhibitory role in glucose uptake by adipocytes. The chain is Serine/threonine-protein phosphatase CPPED1 (Cpped1) from Rattus norvegicus (Rat).